A 983-amino-acid polypeptide reads, in one-letter code: MGMRPAARMPKLTRRSRTLIMVALGVIVLLLAGPRLVDAYVEWLWFGELGYRSVFSTVLVTRVVVFLVAGLVVGGIVFAGLAVAYRTRPVFVPSHDNDPVARYRAMALSRLRLIGVGIPAAIGLLAGIIAQSYWVRIQLFLHGDNFGIRDPQFGKDLGFYAFELPFYRLVLSYVFVAVFLAFVVNLLAHYIFGGIRLSGRTGALSRLARLQLVSLVGVLVLLKAVAYWLDRYELLSRTRSSKPFTGAGYTDINAVQPAKLILIAIALICAAAVFSAITLRDFRIPAIGLVLLMLSSLIVGTGWPLIVEQLIAKPDAVRKESEYIRRSITATRHAYGLTEDVVTYRNYIGDAPAIAQQIATDHATTSNIRLLDPTIVSPAFTQFQRGKNFYYFPDQLSIDRYLDKKGNLRDYVVAARELNPDRLIDNQRDWINRHTVYTHGNGFIASPANTVRGIANDPNQNGGYPQFLVNVVGNGTVVSEGPARLDQPRVYFGPVISNTSADYAIVGKNGDDREYDYETNTDTKRYTYAGSGGVPIGSWLSRSVFAAKFAERNFLFSSVIGSNSKILFNRDPAQRVEAVAPWLTTDSSVYPAIVNKRLVWIIDGYTTLDNYPYSERTSLSSATADSTEVAFNRLAPDKRVAYIRNSVKATVDAYDGAVTLYQQDEYDPVLKVWMKVFPGTVRPKGDITPELAEHLRYPEDLFKVQRMLLAKYHVNDPGTFFNTSDFWDVPLDPNPTASSYQPPYYIVAKNILKNDRSASYQLTSAMNRFKQDFLAAYISASSDPETYGKITVLTIPGNVNGPKLANNAITTDPAVSQDLGVIGRDNQNRIRWGNLLTLPVAQGGLLYVEPVYASPGVSDAASSYPRLIRVAMMYNDKIGYGPTVGDALTGLFGPGAASAATGIEPTEAVPPKSPAGSSTPPIAVVPSAPDGSVALSAAKAAALQEIQAVIGAAREAQKKGDFVAYGSALQRLDDAITKFNSTK.

The next 7 helical transmembrane spans lie at 19–39 (LIMVALGVIVLLLAGPRLVDA), 63–83 (VVVFLVAGLVVGGIVFAGLAV), 113–133 (LIGVGIPAAIGLLAGIIAQSY), 175–195 (FVAVFLAFVVNLLAHYIFGGI), 210–230 (LQLVSLVGVLVLLKAVAYWLD), 259–279 (KLILIAIALICAAAVFSAITL), and 287–307 (IGLVLLMLSSLIVGTGWPLIV).

It belongs to the UPF0182 family.

It is found in the cell membrane. This chain is UPF0182 protein MLBr00644, found in Mycobacterium leprae (strain Br4923).